The sequence spans 303 residues: Dihydroorotate dehydrogenase B (NAD(+)), catalytic subunit (303 aa).

FMN-binding positions include serine 21 and lysine 45–glycine 46. Residues lysine 45 and asparagine 69 to leucine 73 contribute to the substrate site. 2 residues coordinate FMN: asparagine 98 and asparagine 126. Asparagine 126 contributes to the substrate binding site. Cysteine 129 (nucleophile) is an active-site residue. Residues lysine 165 and valine 191 each coordinate FMN. Asparagine 192–threonine 193 serves as a coordination point for substrate. Residues glycine 217 and glycine 243–glycine 244 each bind FMN.

It belongs to the dihydroorotate dehydrogenase family. Type 1 subfamily. As to quaternary structure, heterotetramer of 2 PyrK and 2 PyrD type B subunits. FMN is required as a cofactor.

It localises to the cytoplasm. The catalysed reaction is (S)-dihydroorotate + NAD(+) = orotate + NADH + H(+). It functions in the pathway pyrimidine metabolism; UMP biosynthesis via de novo pathway; orotate from (S)-dihydroorotate (NAD(+) route): step 1/1. Its function is as follows. Catalyzes the conversion of dihydroorotate to orotate with NAD(+) as electron acceptor. The protein is Dihydroorotate dehydrogenase B (NAD(+)), catalytic subunit (pyrD) of Brachyspira hyodysenteriae (strain ATCC 49526 / WA1).